Consider the following 2281-residue polypeptide: Protein Ycf2 (2281 aa).

1635–1642 (GSIGSGRS) serves as a coordination point for ATP.

It belongs to the Ycf2 family.

It is found in the plastid. The protein localises to the chloroplast stroma. In terms of biological role, probable ATPase of unknown function. Its presence in a non-photosynthetic plant (Epifagus virginiana) and experiments in tobacco indicate that it has an essential function which is probably not related to photosynthesis. The polypeptide is Protein Ycf2 (Coffea arabica (Arabian coffee)).